Reading from the N-terminus, the 318-residue chain is Bis(5'-nucleosyl)-tetraphosphatase, symmetrical (318 aa).

Positions 269–318 (PGREVTGPAPVARAPRRPRERLGRQRSRGNRGNAGNTAVPAKPPVDTPQD) are disordered. Over residues 282–297 (APRRPRERLGRQRSRG) the composition is skewed to basic residues. A compositionally biased stretch (pro residues) spans 309–318 (AKPPVDTPQD).

The protein belongs to the Ap4A hydrolase family.

It carries out the reaction P(1),P(4)-bis(5'-adenosyl) tetraphosphate + H2O = 2 ADP + 2 H(+). In terms of biological role, hydrolyzes diadenosine 5',5'''-P1,P4-tetraphosphate to yield ADP. This is Bis(5'-nucleosyl)-tetraphosphatase, symmetrical from Xanthomonas oryzae pv. oryzae (strain PXO99A).